A 392-amino-acid polypeptide reads, in one-letter code: Pectate lyase 3 (392 aa).

Positions 1 to 25 are cleaved as a signal peptide; it reads MGIKHCCYILYFTLALVTLLQPVRS. A glycan (N-linked (GlcNAc...) asparagine) is linked at Asn37. Cysteines 54 and 71 form a disulfide. Residues Asp194, Asp218, and Asp222 each coordinate Ca(2+). The active site involves Arg270.

This sequence belongs to the polysaccharide lyase 1 family. Amb a subfamily. Monomer. Requires Ca(2+) as cofactor. In terms of processing, the N-terminus is blocked. As to expression, pollen and flowers.

It carries out the reaction Eliminative cleavage of (1-&gt;4)-alpha-D-galacturonan to give oligosaccharides with 4-deoxy-alpha-D-galact-4-enuronosyl groups at their non-reducing ends.. It participates in glycan metabolism; pectin degradation; 2-dehydro-3-deoxy-D-gluconate from pectin: step 2/5. Functionally, has pectate lyase activity. The polypeptide is Pectate lyase 3 (Ambrosia artemisiifolia (Common ragweed)).